A 451-amino-acid polypeptide reads, in one-letter code: MQFNSLVLLAGATILSPFVQAQTWTTCNPLNETCPNDPALGTNHTFVFNTSSTVTDYYNITAGSLTYGDDGAEFTIAKQGQSPTIQSKFYIFFGQVSVIMKAATGVGIVSSIVLESDDLDEIDWEFIGGNDTHAETNYFGKGNTTSYDRAIWYPTPSDPTANFHNYTVDWTAERVQWWIDDSLVRTLAYADAVDGKNFPQTPMTVRLGIWSGGDPKGNSQGTIEWAGGETDFTKVPFTMYVKSAAVQDYSTGSEYEWTDKTGDWTSIKVISGNSTVAETITKNETPTLSLGEKWDNLPKTTKLAVYCGGGAAVAALVSAFLFTFLRQRRNGRLEREAYNQLIEKQQQDAYKDQMELHNKGIGGFDNNSYATQGDDALGGWGSNQGTGYVGPSGSASAMASGSPMVQAGQHGPMSPTMVMRNGEMSPHSAEFPQPQQPMFGGSANGGSYMKM.

The N-terminal stretch at 1–21 (MQFNSLVLLAGATILSPFVQA) is a signal peptide. Residues 22-241 (QTWTTCNPLN…FTKVPFTMYV (220 aa)) enclose the GH16 domain. The cysteines at positions 27 and 34 are disulfide-linked. Asparagine 31, asparagine 43, asparagine 49, and asparagine 59 each carry an N-linked (GlcNAc...) asparagine glycan. The active-site Nucleophile is glutamate 121. Glutamate 125 (proton donor) is an active-site residue. Residue glutamate 125 participates in chitin binding. N-linked (GlcNAc...) asparagine glycans are attached at residues asparagine 130, asparagine 143, and asparagine 165. Residues arginine 206, tryptophan 210, and threonine 222 each coordinate chitin. The N-linked (GlcNAc...) asparagine glycan is linked to asparagine 273. The chain crosses the membrane as a helical span at residues 305-325 (VYCGGGAAVAALVSAFLFTFL). The N-linked (GlcNAc...) asparagine glycan is linked to asparagine 366.

This sequence belongs to the glycosyl hydrolase 16 family. CRH1 subfamily. As to quaternary structure, forms homodimers as well as heterodimers with other crh protein members crh1 and crh3. Dimerization may be necessary for the transglycosylation activity.

It localises to the membrane. It catalyses the reaction Random endo-hydrolysis of N-acetyl-beta-D-glucosaminide (1-&gt;4)-beta-linkages in chitin and chitodextrins.. Its function is as follows. Dual chitinase/transglycosylase that plays a role in cell wall architecture. Chitinase and transglycosylase activities are coupled. Required for the polysaccharide cross-linking at the septa and the cell wall. More specifically, transfers chitin to 1,6-beta-glucan in the cell wall. The polypeptide is Crh-like protein 2 (Botryotinia fuckeliana (strain B05.10) (Noble rot fungus)).